The primary structure comprises 203 residues: Large ribosomal subunit protein bL25 (203 aa).

This sequence belongs to the bacterial ribosomal protein bL25 family. CTC subfamily. Part of the 50S ribosomal subunit; part of the 5S rRNA/L5/L18/L25 subcomplex. Contacts the 5S rRNA. Binds to the 5S rRNA independently of L5 and L18.

In terms of biological role, this is one of the proteins that binds to the 5S RNA in the ribosome where it forms part of the central protuberance. This chain is Large ribosomal subunit protein bL25, found in Rickettsia africae (strain ESF-5).